Here is a 639-residue protein sequence, read N- to C-terminus: UvrABC system protein C (639 aa).

The GIY-YIG domain maps to 20–97 (ERSGVYRMFD…IKKFQPKFNI (78 aa)). Positions 207–242 (KELQENLSRKMEELSSQMRFEEAAEIRDRIKALSYV) constitute a UVR domain.

Belongs to the UvrC family. In terms of assembly, interacts with UvrB in an incision complex.

Its subcellular location is the cytoplasm. The UvrABC repair system catalyzes the recognition and processing of DNA lesions. UvrC both incises the 5' and 3' sides of the lesion. The N-terminal half is responsible for the 3' incision and the C-terminal half is responsible for the 5' incision. In Rickettsia peacockii (strain Rustic), this protein is UvrABC system protein C.